Reading from the N-terminus, the 115-residue chain is Tyrosine-protein phosphatase 24 (115 aa).

The Tyrosine-protein phosphatase domain occupies 1-115 (WMMIVEQKCR…ETGSDAPMVV (115 aa)). Position 83 (D83) interacts with substrate.

Belongs to the protein-tyrosine phosphatase family.

It carries out the reaction O-phospho-L-tyrosyl-[protein] + H2O = L-tyrosyl-[protein] + phosphate. This Styela plicata (Wrinkled sea squirt) protein is Tyrosine-protein phosphatase 24 (STY-24).